The following is a 596-amino-acid chain: Choline dehydrogenase, mitochondrial (596 aa).

A mitochondrion-targeting transit peptide spans 1-34 (MWQVLRGWRKGWQSPRGALAWAVQGQPCPPCSRA). 44–73 (TFVVVGAGSAGCVLASRLTEDPNHRVLLLE) provides a ligand contact to FAD. Lys-438 is subject to N6-succinyllysine. Residues Lys-486 and Lys-498 each carry the N6-acetyllysine; alternate modification. An N6-succinyllysine; alternate mark is found at Lys-486 and Lys-498. Residue His-513 is the Proton acceptor of the active site. The residue at position 582 (Lys-582) is an N6-acetyllysine.

The protein belongs to the GMC oxidoreductase family. The cofactor is FAD. Post-translationally, acetylation of Lys-498 is observed in liver mitochondria from fasted mice but not from fed mice.

It is found in the mitochondrion inner membrane. It carries out the reaction choline + A = betaine aldehyde + AH2. It participates in amine and polyamine biosynthesis; betaine biosynthesis via choline pathway; betaine aldehyde from choline (cytochrome c reductase route): step 1/1. The protein is Choline dehydrogenase, mitochondrial (Chdh) of Mus musculus (Mouse).